The primary structure comprises 481 residues: Glutamyl-tRNA(Gln) amidotransferase subunit A (481 aa).

Residues Lys74 and Ser149 each act as charge relay system in the active site. Residue Ser173 is the Acyl-ester intermediate of the active site.

It belongs to the amidase family. GatA subfamily. In terms of assembly, heterotrimer of A, B and C subunits.

The enzyme catalyses L-glutamyl-tRNA(Gln) + L-glutamine + ATP + H2O = L-glutaminyl-tRNA(Gln) + L-glutamate + ADP + phosphate + H(+). In terms of biological role, allows the formation of correctly charged Gln-tRNA(Gln) through the transamidation of misacylated Glu-tRNA(Gln) in organisms which lack glutaminyl-tRNA synthetase. The reaction takes place in the presence of glutamine and ATP through an activated gamma-phospho-Glu-tRNA(Gln). This chain is Glutamyl-tRNA(Gln) amidotransferase subunit A, found in Francisella philomiragia subsp. philomiragia (strain ATCC 25017 / CCUG 19701 / FSC 153 / O#319-036).